The primary structure comprises 1658 residues: Cortactin-binding protein 2 (1658 aa).

Disordered stretches follow at residues 1–24, 203–235, 348–437, 451–475, and 495–612; these read MATDGASCEPDFSRAPEDAAGATA, KTKTSALEEELSAEKRRSTEMEAQMEKQLSEFD, GAAL…LHPG, GNANDPDQNGNTTQSPPSRDVSPTS, and RFTS…PPKP. A coiled-coil region spans residues 119–276; that stretch reads RKMQERMSTQ…EQLKRGNDSK (158 aa). Residues 214 to 235 are compositionally biased toward basic and acidic residues; sequence SAEKRRSTEMEAQMEKQLSEFD. The segment covering 385–394 has biased composition (low complexity); the sequence is GPSAGSASST. The segment covering 399–418 has biased composition (polar residues); the sequence is NSTAPPTVQTPGIAPQSYSQ. Arg-495 is modified (asymmetric dimethylarginine). Residues 509 to 520 are compositionally biased toward low complexity; that stretch reads AAPTGDGGTCPP. The span at 580–590 shows a compositional bias: polar residues; it reads TMASPPSSLPQ. 6 ANK repeats span residues 706–736, 740–769, 773–802, 806–835, 839–868, and 909–939; these read GRPTLLQQAATQGNVTLLSMLLNEEGLDINY, DGHSALYSAAKNGHTDCVRLLLNAGAQVNA, NGFTPLCAAAAQGHFKCVELLISYDANINH, EGQTPLYLACKNGNKECIQLLLEAGTDRSV, DGWTPVHAAVDTGNVDSLKLLMYHRAPACR, and EGWTAAHIAASKGFKNCLEILCMHGGLEPER. A disordered region spans residues 1448–1478; sequence ESGAWRKVSTSPRKKSGRFSPPSWNKPGLSE. A Phosphoserine modification is found at Ser-1521. Disordered regions lie at residues 1538-1595 and 1611-1642; these read RSES…NSQS and PRSKVTQCSQNTKRSSSSSNTRQIEINNNTKE. Basic and acidic residues predominate over residues 1539–1558; the sequence is SESDISKIADSRDDLRRFDG. Polar residues-rich tracts occupy residues 1559–1569 and 1581–1595; these read SRNNPAFSTVN and PLSSHETTECSNSQS. Over residues 1619-1633 the composition is skewed to low complexity; the sequence is SQNTKRSSSSSNTRQ.

Interacts with CTTN/cortactin SH3 domain. Interacts with STRN, STRN4/zinedin and MOB4/phocein; this interactions mediate the association with the STRIPAK core complex and may regulate dendritic spine distribution of the STRIPAK complex in hippocampal neurons. Activation of glutamate receptors weakens the interaction with STRN and STRN4.

The protein resides in the cytoplasm. The protein localises to the cell cortex. Its subcellular location is the cell projection. It is found in the dendritic spine. Its function is as follows. Regulates the dendritic spine distribution of CTTN/cortactin in hippocampal neurons, and thus controls dendritic spinogenesis and dendritic spine maintenance. Associates with the striatin-interacting phosphatase and kinase (STRIPAK) core complex to regulate dendritic spine distribution of the STRIPAK complex in hippocampal neurons. This is Cortactin-binding protein 2 (CTTNBP2) from Neofelis nebulosa (Clouded leopard).